Consider the following 409-residue polypeptide: Serine hydroxymethyltransferase (409 aa).

(6S)-5,6,7,8-tetrahydrofolate contacts are provided by residues Leu-116 and 120 to 122 (GHL). Lys-225 carries the post-translational modification N6-(pyridoxal phosphate)lysine.

This sequence belongs to the SHMT family. In terms of assembly, homodimer. Requires pyridoxal 5'-phosphate as cofactor.

It localises to the cytoplasm. It carries out the reaction (6R)-5,10-methylene-5,6,7,8-tetrahydrofolate + glycine + H2O = (6S)-5,6,7,8-tetrahydrofolate + L-serine. Its pathway is one-carbon metabolism; tetrahydrofolate interconversion. It functions in the pathway amino-acid biosynthesis; glycine biosynthesis; glycine from L-serine: step 1/1. Functionally, catalyzes the reversible interconversion of serine and glycine with tetrahydrofolate (THF) serving as the one-carbon carrier. This reaction serves as the major source of one-carbon groups required for the biosynthesis of purines, thymidylate, methionine, and other important biomolecules. Also exhibits THF-independent aldolase activity toward beta-hydroxyamino acids, producing glycine and aldehydes, via a retro-aldol mechanism. This Acholeplasma laidlawii (strain PG-8A) protein is Serine hydroxymethyltransferase.